Reading from the N-terminus, the 243-residue chain is Pyridoxine 5'-phosphate synthase (243 aa).

Asn9 lines the 3-amino-2-oxopropyl phosphate pocket. 11-12 contributes to the 1-deoxy-D-xylulose 5-phosphate binding site; that stretch reads DH. Arg20 contributes to the 3-amino-2-oxopropyl phosphate binding site. The Proton acceptor role is filled by His45. Positions 47 and 52 each coordinate 1-deoxy-D-xylulose 5-phosphate. Glu72 serves as the catalytic Proton acceptor. Residue Thr102 participates in 1-deoxy-D-xylulose 5-phosphate binding. The active-site Proton donor is His193. 3-amino-2-oxopropyl phosphate contacts are provided by residues Gly194 and 215-216; that span reads GH.

Belongs to the PNP synthase family. As to quaternary structure, homooctamer; tetramer of dimers.

It is found in the cytoplasm. It catalyses the reaction 3-amino-2-oxopropyl phosphate + 1-deoxy-D-xylulose 5-phosphate = pyridoxine 5'-phosphate + phosphate + 2 H2O + H(+). The protein operates within cofactor biosynthesis; pyridoxine 5'-phosphate biosynthesis; pyridoxine 5'-phosphate from D-erythrose 4-phosphate: step 5/5. In terms of biological role, catalyzes the complicated ring closure reaction between the two acyclic compounds 1-deoxy-D-xylulose-5-phosphate (DXP) and 3-amino-2-oxopropyl phosphate (1-amino-acetone-3-phosphate or AAP) to form pyridoxine 5'-phosphate (PNP) and inorganic phosphate. This is Pyridoxine 5'-phosphate synthase from Salmonella typhimurium (strain LT2 / SGSC1412 / ATCC 700720).